We begin with the raw amino-acid sequence, 131 residues long: Profilin (131 aa).

It belongs to the profilin family. As to quaternary structure, occurs in many kinds of cells as a complex with monomeric actin in a 1:1 ratio.

The protein localises to the cytoplasm. It is found in the cytoskeleton. Binds to actin and affects the structure of the cytoskeleton. At high concentrations, profilin prevents the polymerization of actin, whereas it enhances it at low concentrations. By binding to PIP2, it inhibits the formation of IP3 and DG. The protein is Profilin of Chenopodium album (Fat hen).